Reading from the N-terminus, the 225-residue chain is Redox-sensing transcriptional repressor Rex (225 aa).

Positions 16-55 form a DNA-binding region, H-T-H motif; the sequence is IYYRYLNILLDADKKRVSSTELSEAVKVDSATIRRDFSYF. 90–95 is a binding site for NAD(+); it reads GVGNLG.

It belongs to the transcriptional regulatory Rex family. Homodimer.

The protein localises to the cytoplasm. Modulates transcription in response to changes in cellular NADH/NAD(+) redox state. In Lactiplantibacillus plantarum (strain ATCC BAA-793 / NCIMB 8826 / WCFS1) (Lactobacillus plantarum), this protein is Redox-sensing transcriptional repressor Rex.